The following is a 227-amino-acid chain: UPF0659 protein YMR090W (227 aa).

The protein belongs to the UPF0659 family.

The protein localises to the cytoplasm. This Saccharomyces cerevisiae (strain ATCC 204508 / S288c) (Baker's yeast) protein is UPF0659 protein YMR090W.